Here is a 308-residue protein sequence, read N- to C-terminus: Dual oxidase maturation factor 1 (308 aa).

At 1-21 (MQANIFPFYPQPRTPFKFDTK) the chain is on the extracellular side. Residues 22–42 (IIEIIIICIVTACTFIIILPG) form a helical membrane-spanning segment. At 43–49 (IRGKSRS) the chain is on the cytoplasmic side. Residues 50–70 (IWLLRILTSLFIGAVILAVNF) traverse the membrane as a helical segment. Residues 71–91 (TSDWEMGTITATTVYKSFSHS) are Extracellular-facing. A helical membrane pass occupies residues 92–112 (MLNASIGLWIGLKGLNITLIG). Over 113–175 (NPEYQLNETI…GLFQQYCIST (63 aa)) the chain is Cytoplasmic. Residues 176-198 (YYSSGIMWIAFCSWILYNVLFSM) traverse the membrane as a helical segment. A topological domain (extracellular) is located at residue proline 199. A helical membrane pass occupies residues 200 to 220 (VILYGIYMMFVTAICMLVSLI). Residues 221–247 (SFASVRKAPVCNIQFGNSILKTHFGVS) are Cytoplasmic-facing. A helical membrane pass occupies residues 248 to 268 (YWLSLITGLLCLIISLVLLFL). At 269–308 (YKTQPKVLQLIFSYGEEEDLSNKSENEEEHSSVLSLNEIL) the chain is on the extracellular side. A glycan (N-linked (GlcNAc...) asparagine) is linked at asparagine 290.

It belongs to the DUOXA family.

The protein resides in the membrane. Its function is as follows. Possible role in maturation and transport from the endoplasmic reticulum to the plasma membrane of functional dual oxidase. This is Dual oxidase maturation factor 1 (duoxa1) from Xenopus laevis (African clawed frog).